The primary structure comprises 388 residues: Chorismate synthase (388 aa).

2 residues coordinate NADP(+): Arg-39 and Arg-45. Residues 130-132, 251-252, Gly-296, 311-315, and Arg-337 each bind FMN; these read RSS, NA, and KPIPT.

Belongs to the chorismate synthase family. Homotetramer. Requires FMNH2 as cofactor.

It catalyses the reaction 5-O-(1-carboxyvinyl)-3-phosphoshikimate = chorismate + phosphate. It participates in metabolic intermediate biosynthesis; chorismate biosynthesis; chorismate from D-erythrose 4-phosphate and phosphoenolpyruvate: step 7/7. In terms of biological role, catalyzes the anti-1,4-elimination of the C-3 phosphate and the C-6 proR hydrogen from 5-enolpyruvylshikimate-3-phosphate (EPSP) to yield chorismate, which is the branch point compound that serves as the starting substrate for the three terminal pathways of aromatic amino acid biosynthesis. This reaction introduces a second double bond into the aromatic ring system. This is Chorismate synthase from Lactococcus lactis subsp. cremoris (strain SK11).